The primary structure comprises 126 residues: Phosphoribosyl-AMP cyclohydrolase (126 aa).

Residue D77 participates in Mg(2+) binding. Residue C78 coordinates Zn(2+). Positions 79 and 81 each coordinate Mg(2+). Positions 95 and 102 each coordinate Zn(2+).

Belongs to the PRA-CH family. Homodimer. Requires Mg(2+) as cofactor. The cofactor is Zn(2+).

It is found in the cytoplasm. The enzyme catalyses 1-(5-phospho-beta-D-ribosyl)-5'-AMP + H2O = 1-(5-phospho-beta-D-ribosyl)-5-[(5-phospho-beta-D-ribosylamino)methylideneamino]imidazole-4-carboxamide. Its pathway is amino-acid biosynthesis; L-histidine biosynthesis; L-histidine from 5-phospho-alpha-D-ribose 1-diphosphate: step 3/9. Catalyzes the hydrolysis of the adenine ring of phosphoribosyl-AMP. This is Phosphoribosyl-AMP cyclohydrolase from Cellvibrio japonicus (strain Ueda107) (Pseudomonas fluorescens subsp. cellulosa).